The sequence spans 395 residues: MTRKLFTSESVTEGHPDKIADRIADAVLDAIYAKDNQARVACECLVSTGLILVAGQITTDCYVDIPRVARETVREIGYTRAKFGFDCDTCAVITSIDEQSPDIAMGVNEAWEKKQGEARDEVETLGAGDQGMMFGYATSETPEFMPMPIALAHALTRRLAAVRKERILPYLRPDGKSQVTVEYEDGRPVRVDTVVISTQHRPDIDMATLRDEVLETVIKPVIPAEMLDNRTRYFINPTGRFVIGGPQGDTGLTGRKLIVDTYGGMARHGGGALSGKDPTKVDRSAAYAARYVAKNVVAAGLADRCEVQVAYAIGVARPVSISVETFGTGKVSDDRLVELIRAHFDLRPGAIIRDLDLRRPIYKAVSVYGHFGRPDLDLPWERLDKVEALRADAGL.

His-15 is a binding site for ATP. Asp-17 is a binding site for Mg(2+). A K(+)-binding site is contributed by Glu-43. Gln-99 serves as a coordination point for L-methionine. Residues 99-109 form a flexible loop region; sequence QSPDIAMGVNE. ATP-binding positions include 174–176, 240–241, Asp-249, 255–256, Ala-272, and Lys-276; these read DGK, RF, and RK. An L-methionine-binding site is contributed by Asp-249. Position 280 (Lys-280) interacts with L-methionine.

The protein belongs to the AdoMet synthase family. As to quaternary structure, homotetramer; dimer of dimers. Mg(2+) is required as a cofactor. Requires K(+) as cofactor.

The protein resides in the cytoplasm. The enzyme catalyses L-methionine + ATP + H2O = S-adenosyl-L-methionine + phosphate + diphosphate. Its pathway is amino-acid biosynthesis; S-adenosyl-L-methionine biosynthesis; S-adenosyl-L-methionine from L-methionine: step 1/1. Functionally, catalyzes the formation of S-adenosylmethionine (AdoMet) from methionine and ATP. The overall synthetic reaction is composed of two sequential steps, AdoMet formation and the subsequent tripolyphosphate hydrolysis which occurs prior to release of AdoMet from the enzyme. The protein is S-adenosylmethionine synthase of Moorella thermoacetica (strain ATCC 39073 / JCM 9320).